The chain runs to 140 residues: MAIERTFSIIKPDATRRNLTGRINAVFEENGLRIVAQKRVQLSQAQAEAFYGVHRERPFFNDLVSFMISGPVVVQVLEGENAVARNRELMGATDPKKADAGTIRAQFAESIEANSVHGSDSAENAAIEIAYFFAGSEIVA.

Residues K11, F59, R87, T93, R104, and N114 each contribute to the ATP site. Residue H117 is the Pros-phosphohistidine intermediate of the active site.

It belongs to the NDK family. As to quaternary structure, homotetramer. Requires Mg(2+) as cofactor.

The protein localises to the cytoplasm. It carries out the reaction a 2'-deoxyribonucleoside 5'-diphosphate + ATP = a 2'-deoxyribonucleoside 5'-triphosphate + ADP. The catalysed reaction is a ribonucleoside 5'-diphosphate + ATP = a ribonucleoside 5'-triphosphate + ADP. Its function is as follows. Major role in the synthesis of nucleoside triphosphates other than ATP. The ATP gamma phosphate is transferred to the NDP beta phosphate via a ping-pong mechanism, using a phosphorylated active-site intermediate. In Granulibacter bethesdensis (strain ATCC BAA-1260 / CGDNIH1), this protein is Nucleoside diphosphate kinase.